A 202-amino-acid chain; its full sequence is Cold-regulated 413 plasma membrane protein 4 (202 aa).

Residues 1–42 (MGRGEFLAMKTEENAANLINSDMNEFVAAAKKLVKDVGMLGG) lie on the Extracellular side of the membrane. The helical transmembrane segment at 43-63 (VGFGTSVLQWAASIFAIYLLI) threads the bilayer. At 64–72 (LDRTNWKTK) the chain is on the cytoplasmic side. The chain crosses the membrane as a helical span at residues 73-93 (MLTTLLVPYIFFTLPSVIFQF). The Extracellular segment spans residues 94–97 (FSGD). A helical transmembrane segment spans residues 98–118 (FGKWIALIAIIVRLFFPKEFP). Position 119 (Glu-119) is a topological domain, cytoplasmic. A helical transmembrane segment spans residues 120-140 (WLEIPVALILIVVVSPSLIAW). The Extracellular portion of the chain corresponds to 141–145 (TLRES). A helical membrane pass occupies residues 146-166 (WVGAVICLVIACYLFHEHIKA). Over 167–181 (SGGFKNSFTQKNGIS) the chain is Cytoplasmic. A helical transmembrane segment spans residues 182 to 202 (NTIGIVALLVYPVWTIFFHIF).

It belongs to the Cold-regulated 413 protein family.

It is found in the cell membrane. The polypeptide is Cold-regulated 413 plasma membrane protein 4 (Arabidopsis thaliana (Mouse-ear cress)).